The following is a 378-amino-acid chain: MTEQLQMTRRTMLAGAALAGAVAPLLHTAQAHAAGAAAAAGAAPVDISTLPRVKVDLVKPPFVHAHDQVAKTGPRVVEFTMTIEEKKLVIDREGTEIHAMTFNGSVPGPLMVVHENDYVELRLINPDTNTLLHNIDFHAATGALGGGALTQVNPGEETTLRFKATKPGVFVYHCAPEGMVPWHVTSGMNGAIMVLPRDGLKDEKGQPLTYDKIYYVGEQDFYVPKDEAGNYKKYETPGEAYEDAVKAMRTLTPTHIVFNGAVGALTGDHALTAAVGERVLVVHSQANRDTRPHLIGGHGDYVWATGKFRNPPDLDQETWLIPGGTAGAAFYTFRQPGVYAYVNHNLIEAFELGAAGHFKVTGEWNDDLMTSVVKPASM.

A signal peptide (tat-type signal) is located at residues 1–38 (MTEQLQMTRRTMLAGAALAGAVAPLLHTAQAHAAGAAA). 2 Plastocyanin-like domains span residues 39–213 (AAGA…YDKI) and 214–378 (YYVG…PASM). Cu cation is bound by residues His-133, His-138, His-173, Cys-174, His-183, Met-188, and His-344.

It belongs to the multicopper oxidase family. Homotrimer. Requires Cu(+) as cofactor. Cu(2+) is required as a cofactor. FAD serves as cofactor. In terms of processing, predicted to be exported by the Tat system. The position of the signal peptide cleavage has been experimentally proven.

The protein resides in the periplasm. The enzyme catalyses nitric oxide + Fe(III)-[cytochrome c] + H2O = Fe(II)-[cytochrome c] + nitrite + 2 H(+). It functions in the pathway nitrogen metabolism; nitrate reduction (denitrification); dinitrogen from nitrate: step 2/4. The protein is Copper-containing nitrite reductase (nirK) of Achromobacter cycloclastes.